Consider the following 911-residue polypeptide: DNA ligase 4 (911 aa).

ATP is bound by residues Glu271, Thr272, Lys273, Leu274, Arg278, Glu331, Lys345, Phe367, Glu427, Lys432, Lys449, and Lys451. Residue Lys273 is the N6-AMP-lysine intermediate of the active site. Glu331 provides a ligand contact to Mg(2+). Position 427 (Glu427) interacts with Mg(2+). The required for catalytic activity stretch occupies residues 610–620; the sequence is LATKHLHVGDD. 2 consecutive BRCT domains span residues 654-743 and 808-911; these read KVSN…PRFM and SPLS…QYLL.

Belongs to the ATP-dependent DNA ligase family. In terms of assembly, interacts with XRCC4; the LIG4-XRCC4 subcomplex has a 1:2 stoichiometry and XRCC4 is required for LIG4 stability. Component of the core long-range non-homologous end joining (NHEJ) complex (also named DNA-PK complex) composed of PRKDC, LIG4, XRCC4, XRCC6/Ku70, XRCC5/Ku86 and NHEJ1/XLF. Additional component of the NHEJ complex includes PAXX. Following autophosphorylation, PRKDC dissociates from DNA, leading to formation of the short-range NHEJ complex, composed of LIG4, XRCC4, XRCC6/Ku70, XRCC5/Ku86 and NHEJ1/XLF. Interacts with DCLRE1C; the interaction is direct. Interacts with APLF. Requires Mg(2+) as cofactor.

The protein resides in the nucleus. The catalysed reaction is ATP + (deoxyribonucleotide)n-3'-hydroxyl + 5'-phospho-(deoxyribonucleotide)m = (deoxyribonucleotide)n+m + AMP + diphosphate.. Its function is as follows. DNA ligase involved in DNA non-homologous end joining (NHEJ); required for double-strand break (DSB) repair and V(D)J recombination. Catalyzes the NHEJ ligation step of the broken DNA during DSB repair by resealing the DNA breaks after the gap filling is completed. Joins single-strand breaks in a double-stranded polydeoxynucleotide in an ATP-dependent reaction. LIG4 is mechanistically flexible: it can ligate nicks as well as compatible DNA overhangs alone, while in the presence of XRCC4, it can ligate ends with 2-nucleotides (nt) microhomology and 1-nt gaps. Forms a subcomplex with XRCC4; the LIG4-XRCC4 subcomplex is responsible for the NHEJ ligation step and XRCC4 enhances the joining activity of LIG4. Binding of the LIG4-XRCC4 complex to DNA ends is dependent on the assembly of the DNA-dependent protein kinase complex DNA-PK to these DNA ends. LIG4 regulates nuclear localization of XRCC4. The protein is DNA ligase 4 of Mus musculus (Mouse).